The sequence spans 495 residues: Putative FAD-containing monooxygenase MymA (495 aa).

FAD is bound by residues S15, E36, W45, 56 to 57, and V104; that span reads DS.

The protein belongs to the FAD-binding monooxygenase family. The cofactor is FAD.

Its function is as follows. Required for maintaining the appropriate mycolic acid composition and permeability of the envelope on its exposure to acidic pH. This Mycobacterium tuberculosis (strain CDC 1551 / Oshkosh) protein is Putative FAD-containing monooxygenase MymA (mymA).